Consider the following 400-residue polypeptide: Tryptophan synthase beta chain (400 aa).

At Lys-91 the chain carries N6-(pyridoxal phosphate)lysine.

The protein belongs to the TrpB family. In terms of assembly, tetramer of two alpha and two beta chains. It depends on pyridoxal 5'-phosphate as a cofactor.

The catalysed reaction is (1S,2R)-1-C-(indol-3-yl)glycerol 3-phosphate + L-serine = D-glyceraldehyde 3-phosphate + L-tryptophan + H2O. The protein operates within amino-acid biosynthesis; L-tryptophan biosynthesis; L-tryptophan from chorismate: step 5/5. Functionally, the beta subunit is responsible for the synthesis of L-tryptophan from indole and L-serine. The chain is Tryptophan synthase beta chain from Listeria monocytogenes serotype 4b (strain CLIP80459).